Reading from the N-terminus, the 141-residue chain is Large ribosomal subunit protein uL11c (141 aa).

The protein belongs to the universal ribosomal protein uL11 family. In terms of assembly, part of the ribosomal stalk of the 50S ribosomal subunit. Interacts with L10 and the large rRNA to form the base of the stalk. L10 forms an elongated spine to which L12 dimers bind in a sequential fashion forming a multimeric L10(L12)X complex.

The protein resides in the plastid. Its subcellular location is the chloroplast. Its function is as follows. Forms part of the ribosomal stalk which helps the ribosome interact with GTP-bound translation factors. In Thalassiosira pseudonana (Marine diatom), this protein is Large ribosomal subunit protein uL11c.